Here is a 434-residue protein sequence, read N- to C-terminus: 4-hydroxyphenylpyruvate dioxygenase (434 aa).

Residues 1–21 (MPPTPTTPAATGAAAAVTPEH) form a disordered region. Low complexity predominate over residues 7-19 (TPAATGAAAAVTP). VOC domains follow at residues 41–192 (SFHH…FLPG) and 208–368 (RFDH…IFTK). 3 residues coordinate Fe cation: His-211, His-293, and Glu-379.

This sequence belongs to the 4HPPD family. The cofactor is Fe cation.

Its subcellular location is the cytoplasm. The catalysed reaction is 3-(4-hydroxyphenyl)pyruvate + O2 = homogentisate + CO2. It participates in amino-acid degradation; L-phenylalanine degradation; acetoacetate and fumarate from L-phenylalanine: step 3/6. Its pathway is cofactor biosynthesis; prenylquinone biosynthesis. In Hordeum vulgare (Barley), this protein is 4-hydroxyphenylpyruvate dioxygenase.